The sequence spans 357 residues: tRNA-specific 2-thiouridylase MnmA (357 aa).

ATP-binding positions include 6-13 (AMSGGVDS) and Leu32. Cys101 acts as the Nucleophile in catalysis. A disulfide bond links Cys101 and Cys193. Residue Gly125 coordinates ATP. Residues 143-145 (KDQ) form an interaction with tRNA region. The active-site Cysteine persulfide intermediate is Cys193.

The protein belongs to the MnmA/TRMU family.

It is found in the cytoplasm. The catalysed reaction is S-sulfanyl-L-cysteinyl-[protein] + uridine(34) in tRNA + AH2 + ATP = 2-thiouridine(34) in tRNA + L-cysteinyl-[protein] + A + AMP + diphosphate + H(+). Its function is as follows. Catalyzes the 2-thiolation of uridine at the wobble position (U34) of tRNA, leading to the formation of s(2)U34. This chain is tRNA-specific 2-thiouridylase MnmA, found in Mycolicibacterium vanbaalenii (strain DSM 7251 / JCM 13017 / BCRC 16820 / KCTC 9966 / NRRL B-24157 / PYR-1) (Mycobacterium vanbaalenii).